We begin with the raw amino-acid sequence, 277 residues long: Putative phosphoenolpyruvate synthase regulatory protein (277 aa).

Residue 157–164 (GVSRCGKT) coordinates ADP.

Belongs to the pyruvate, phosphate/water dikinase regulatory protein family. PSRP subfamily.

It carries out the reaction [pyruvate, water dikinase] + ADP = [pyruvate, water dikinase]-phosphate + AMP + H(+). The catalysed reaction is [pyruvate, water dikinase]-phosphate + phosphate + H(+) = [pyruvate, water dikinase] + diphosphate. Functionally, bifunctional serine/threonine kinase and phosphorylase involved in the regulation of the phosphoenolpyruvate synthase (PEPS) by catalyzing its phosphorylation/dephosphorylation. The protein is Putative phosphoenolpyruvate synthase regulatory protein of Photobacterium profundum (strain SS9).